The chain runs to 320 residues: Malate dehydrogenase (320 aa).

NAD(+) contacts are provided by residues 10–15 (GSGMIG) and Asp34. Positions 83 and 89 each coordinate substrate. NAD(+)-binding positions include Asn96 and 119-121 (ITN). The substrate site is built by Asn121 and Arg152. His176 functions as the Proton acceptor in the catalytic mechanism.

The protein belongs to the LDH/MDH superfamily. MDH type 3 family.

It catalyses the reaction (S)-malate + NAD(+) = oxaloacetate + NADH + H(+). In terms of biological role, catalyzes the reversible oxidation of malate to oxaloacetate. This Rhizobium etli (strain CIAT 652) protein is Malate dehydrogenase.